A 255-amino-acid chain; its full sequence is Cathepsin G (255 aa).

The N-terminal stretch at 1–18 (MQPLLLLLAFLLPTGAEA) is a signal peptide. A propeptide spans 19-20 (GE) (activation peptide). The segment at 21 to 25 (IIGGR) is important for antimicrobial activity. A Peptidase S1 domain is found at 21–243 (IIGGRESRPH…FLPWIRTTMR (223 aa)). The cysteines at positions 49 and 65 are disulfide-linked. Catalysis depends on His64, which acts as the Charge relay system. Residue Asn71 is glycosylated (N-linked (GlcNAc...) (complex) asparagine; alternate). A glycan (N-linked (GlcNAc...) (paucimannose) asparagine; alternate) is linked at Asn71. Residues 97 to 111 (HPQYNQRTIQNDIML) form an important for antimicrobial activity region. Asp108 (charge relay system) is an active-site residue. 2 cysteine pairs are disulfide-bonded: Cys142-Cys207 and Cys172-Cys186. Ser201 functions as the Charge relay system in the catalytic mechanism. Positions 245–255 (FKLLDQMETPL) are excised as a propeptide.

Belongs to the peptidase S1 family. (Microbial infection) Interacts with CASP4; the interaction is promoted by the Td92 surface protein of the periodontal pathogen T.denticola and leads to CASP4 activation. As to quaternary structure, (Microbial infection) Interacts with M.tuberculosis protein Rv3364c. In terms of assembly, (Microbial infection) Interacts with S.aureus EapH1; EapH1 acts as a reversible inhibitor of CATG activity. Post-translationally, two C-terminal truncation variants have been identified, one which ends at Arg-243 and one which ends at Ser-244. As to expression, expressed in neutrophils (at protein level). Expressed in B cells.

It is found in the cell membrane. The protein resides in the cytoplasmic granule. Its subcellular location is the secreted. It localises to the cytoplasm. The protein localises to the cytosol. It is found in the lysosome. The protein resides in the nucleus. The enzyme catalyses Specificity similar to chymotrypsin C.. Its activity is regulated as follows. Inhibited by soybean trypsin inhibitor, benzamidine, the synthetic peptide R13K, Z-Gly-Leu-Phe-CH2Cl, phenylmethylsulfonyl fluoride, 3,4-dichloroisocoumarin, DFP, SBTI and alpha-1-antitrypsin. Inhibited by LPS from P.aeruginosa but not by LPS from S.minnesota. Not inhibited by elastinal, CMK, TLCK, ETDA or leupeptin. With respect to regulation, (Microbial infection) Inhibited reversibly by S.aureus EapH1. (Microbial infection) Activity is induced by the Td92 surface protein of the periodontal pathogen T.denticola. Its function is as follows. Serine protease with trypsin- and chymotrypsin-like specificity. Also displays antibacterial activity against Gram-negative and Gram-positive bacteria independent of its protease activity. Prefers Phe and Tyr residues in the P1 position of substrates but also cleaves efficiently after Trp and Leu. Shows a preference for negatively charged amino acids in the P2' position and for aliphatic amino acids both upstream and downstream of the cleavage site. Required for recruitment and activation of platelets which is mediated by the F2RL3/PAR4 platelet receptor. Binds reversibly to and stimulates B cells and CD4(+) and CD8(+) T cells. Also binds reversibly to natural killer (NK) cells and enhances NK cell cytotoxicity through its protease activity. Cleaves complement C3. Cleaves vimentin. Cleaves thrombin receptor F2R/PAR1 and acts as either an agonist or an inhibitor, depending on the F2R cleavage site. Cleavage of F2R at '41-Arg-|-Ser-42' results in receptor activation while cleavage at '55-Phe-|-Trp-56' results in inhibition of receptor activation. Cleaves the synovial mucin-type protein PRG4/lubricin. Cleaves and activates IL36G which promotes expression of chemokines CXCL1 and CXLC8 in keratinocytes. Cleaves IL33 into mature forms which have greater activity than the unprocessed form. Cleaves coagulation factor F8 to produce a partially activated form. Also cleaves and activates coagulation factor F10. Cleaves leukocyte cell surface protein SPN/CD43 to release its extracellular domain and trigger its intramembrane proteolysis by gamma-secretase, releasing the CD43 cytoplasmic tail chain (CD43-ct) which translocates to the nucleus. Cleaves CCL5/RANTES to produce RANTES(4-68) lacking the N-terminal three amino acids which exhibits reduced chemotactic and antiviral activities. During apoptosis, cleaves SMARCA2/BRM to produce a 160 kDa cleavage product which localizes to the cytosol. Cleaves myelin basic protein MBP in B cell lysosomes at '224-Phe-|-Lys-225' and '248-Phe-|-Ser-249', degrading the major immunogenic MBP epitope and preventing the activation of MBP-specific autoreactive T cells. Cleaves annexin ANXA1 and antimicrobial peptide CAMP to produce peptides which act on neutrophil N-formyl peptide receptors to enhance the release of CXCL2. Acts as a ligand for the N-formyl peptide receptor FPR1, enhancing phagocyte chemotaxis. Has antibacterial activity against the Gram-negative bacteria N.gonorrhoeae and P.aeruginosa. Likely to act against N.gonorrhoeae by interacting with N.gonorrhoeae penA/PBP2. Exhibits potent antimicrobial activity against the Gram-positive bacterium L.monocytogenes. Has antibacterial activity against the Gram-positive bacterium S.aureus and degrades S.aureus biofilms, allowing polymorphonuclear leukocytes to penetrate the biofilm and phagocytose bacteria. Has antibacterial activity against M.tuberculosis. Mediates CASP4 activation induced by the Td92 surface protein of the periodontal pathogen T.denticola, causing production and secretion of IL1A and leading to pyroptosis of gingival fibroblasts. Induces platelet aggregation which is strongly potentiated in the presence of ELANE. This chain is Cathepsin G (CTSG), found in Homo sapiens (Human).